The primary structure comprises 198 residues: MNKVLYIKANAKPEGKSRTFKISDVFIDEYKQNNPDDEIITLDLYKEDIDFLRSKDLDTVFGPKNEESKNHPTLKYAYQFAEADKYVIAAPMWNLSIPAILKAYVDYISVVGIAFKYTQEGAVGLLENKKAVYIAARGGSYAETPYELDGIYLRSILGFFGIKDITTISAEKLDVQGENVDKILEEAIDKAKETAKNF.

FMN is bound at residue methionine 92–leucine 95.

The protein belongs to the azoreductase type 1 family. As to quaternary structure, homodimer. It depends on FMN as a cofactor.

The catalysed reaction is 2 a quinone + NADH + H(+) = 2 a 1,4-benzosemiquinone + NAD(+). It catalyses the reaction N,N-dimethyl-1,4-phenylenediamine + anthranilate + 2 NAD(+) = 2-(4-dimethylaminophenyl)diazenylbenzoate + 2 NADH + 2 H(+). Its function is as follows. Quinone reductase that provides resistance to thiol-specific stress caused by electrophilic quinones. Also exhibits azoreductase activity. Catalyzes the reductive cleavage of the azo bond in aromatic azo compounds to the corresponding amines. The sequence is that of FMN-dependent NADH:quinone oxidoreductase from Clostridium beijerinckii (strain ATCC 51743 / NCIMB 8052) (Clostridium acetobutylicum).